The chain runs to 970 residues: Protein tweety (970 aa).

Residues 1-47 are Extracellular-facing; that stretch reads MGDYHEFTDQYKVPVIAKLLHALPHYNITFHKINSTFRPNDEIYLES. N-linked (GlcNAc...) asparagine glycans are attached at residues Asn27 and Asn34. Residues 48–68 traverse the membrane as a helical segment; that stretch reads LGILGSVPAALLIVSLLGLLF. Residues 69 to 89 lie on the Cytoplasmic side of the membrane; that stretch reads YLMTRCCDRKPRPAHSITSLK. A helical membrane pass occupies residues 90-110; sequence VALSIVTVMCCAAIGLGLYGN. The Extracellular portion of the chain corresponds to 111–219; sequence DDLHNGLLEV…GDQWELIRWP (109 aa). Asn136, Asn166, and Asn183 each carry an N-linked (GlcNAc...) asparagine glycan. A helical membrane pass occupies residues 220 to 240; sequence GTVATLALLLVLCAVLLVGVA. Residues 241-246 lie on the Cytoplasmic side of the membrane; that stretch reads RHSRCA. A helical transmembrane segment spans residues 247–267; it reads LILFSVCGLLAVTGSWLMSGL. At 268 to 395 the chain is on the extracellular side; it reads YLSSSVAVGD…RGLCEGGLLG (128 aa). Asn359 carries an N-linked (GlcNAc...) asparagine glycan. A helical membrane pass occupies residues 396–416; it reads LVLMLIASFIAAILLTIMVWV. Residues 417–970 are Cytoplasmic-facing; the sequence is DSHTWIYIRK…DESNYAVTEL (554 aa). Over residues 532–571 the composition is skewed to low complexity; the sequence is NAAANMPPTTQAAQQQQQQQAQQQQQQAQQQLGGPQPIYC. Disordered regions lie at residues 532-587, 677-763, and 849-970; these read NAAA…QHPH, RQNS…NESD, and MKAI…VTEL. Positions 572-587 are enriched in basic residues; it reads HHPHQHPHPHPHQHPH. Composition is skewed to low complexity over residues 689 to 700, 707 to 737, and 745 to 759; these read HQHPPSLHQQQQ, QQQQ…QQHH, and QHQQ…QQQP. Residues 852–868 are compositionally biased toward pro residues; it reads IPPPRIGTPTSPPPPVA. Gly residues-rich tracts occupy residues 883-894 and 931-945; these read QNGGAVVGGGGA and NGGG…GGGA. Polar residues predominate over residues 961–970; the sequence is DESNYAVTEL.

This sequence belongs to the tweety family.

It is found in the cell membrane. Its function is as follows. Non-essential protein that probably acts as a chloride channel. This chain is Protein tweety (tty), found in Drosophila melanogaster (Fruit fly).